Reading from the N-terminus, the 96-residue chain is MLGKIAVEVAYALPEKQYLQRVTLQEGATVEEAIRASGLLELRTDIDLTKNKVGIYSRPAKLSDSVHDGDRVEIYRPLIADPKELRRQRAEKSANK.

Belongs to the UPF0125 (RnfH) family.

The chain is Protein RnfH from Shigella flexneri.